The following is a 316-amino-acid chain: DnaJ homolog subfamily B member 13 (316 aa).

A J domain is found at 4–68 (DYYSVLGITR…MKRGIYDKFG (65 aa)).

Homodimer. Component of the axonemal radial spoke complex 1 (RS1), at least composed of spoke head proteins RSPH1, RSPH3, RSPH9 and the cilia-specific component RSPH4A or sperm-specific component RSPH6A, spoke stalk proteins RSPH14, DNAJB13, DYDC1, ROPN1L and NME5, and the anchor protein IQUB. Interacts with SUN5. Interacts with IQUB. Specifically expressed in testis and trachea.

The protein resides in the cell projection. The protein localises to the cilium. Its subcellular location is the flagellum. Functions as part of axonemal radial spoke complexes that play an important part in the motility of sperm and cilia. This Homo sapiens (Human) protein is DnaJ homolog subfamily B member 13 (DNAJB13).